The sequence spans 266 residues: Mitochondrial S-adenosylmethionine carrier protein (266 aa).

3 Solcar repeats span residues 4–77 (RELC…AKRF), 85–167 (LSPI…LKNL), and 176–264 (VDCW…VRSS). A run of 6 helical transmembrane segments spans residues 5–25 (ELCA…LILF), 49–69 (IYAG…AFFV), 84–104 (YLSP…ACLI), 141–161 (RGYK…FPLW), 181–201 (SAVC…PLDV), and 237–257 (FAGV…FLGA).

It belongs to the mitochondrial carrier (TC 2.A.29) family.

The protein localises to the mitochondrion inner membrane. The catalysed reaction is S-adenosyl-L-homocysteine(out) + S-adenosyl-L-methionine(in) = S-adenosyl-L-homocysteine(in) + S-adenosyl-L-methionine(out). Its function is as follows. Mitochondrial S-adenosyl-L-methionine/S-adenosyl-L-homocysteine antiporter. Mediates the exchange of cytosolic S-adenosyl-L-methionine, the predominant methyl-group donor for macromolecule methylation processes, for mitochondrial S-adenosylhomocysteine(SAH), a by-product of methylation reactions. The chain is Mitochondrial S-adenosylmethionine carrier protein (slc25a26) from Xenopus laevis (African clawed frog).